Here is a 335-residue protein sequence, read N- to C-terminus: Biotin synthase (335 aa).

One can recognise a Radical SAM core domain in the interval 47-276 (FYGKKVKLNM…SKEIRISGGR (230 aa)). [4Fe-4S] cluster is bound by residues Cys65, Cys69, and Cys72. Residues Cys109, Cys141, Cys201, and Arg271 each coordinate [2Fe-2S] cluster.

It belongs to the radical SAM superfamily. Biotin synthase family. As to quaternary structure, homodimer. [4Fe-4S] cluster serves as cofactor. It depends on [2Fe-2S] cluster as a cofactor.

It catalyses the reaction (4R,5S)-dethiobiotin + (sulfur carrier)-SH + 2 reduced [2Fe-2S]-[ferredoxin] + 2 S-adenosyl-L-methionine = (sulfur carrier)-H + biotin + 2 5'-deoxyadenosine + 2 L-methionine + 2 oxidized [2Fe-2S]-[ferredoxin]. It functions in the pathway cofactor biosynthesis; biotin biosynthesis; biotin from 7,8-diaminononanoate: step 2/2. Catalyzes the conversion of dethiobiotin (DTB) to biotin by the insertion of a sulfur atom into dethiobiotin via a radical-based mechanism. The protein is Biotin synthase of Bacillus subtilis subsp. natto.